An 83-amino-acid polypeptide reads, in one-letter code: Bowman-Birk type proteinase inhibitor (83 aa).

Disulfide bonds link cysteine 18–cysteine 72, cysteine 19–cysteine 34, cysteine 22–cysteine 68, cysteine 24–cysteine 32, cysteine 42–cysteine 49, cysteine 46–cysteine 61, and cysteine 51–cysteine 59.

This sequence belongs to the Bowman-Birk serine protease inhibitor family.

The chain is Bowman-Birk type proteinase inhibitor from Phaseolus lunatus (Lima bean).